Reading from the N-terminus, the 248-residue chain is N-acylneuraminate-9-phosphatase (248 aa).

Asp12 provides a ligand contact to Mg(2+). Phosphate-binding residues include Leu13, Asp14, Thr131, Asn132, and Lys164. Asp14 lines the Mg(2+) pocket. Mg(2+) is bound at residue Asp189.

Belongs to the HAD-like hydrolase superfamily. NANP family. Requires Mg(2+) as cofactor.

The enzyme catalyses N-acetylneuraminate 9-phosphate + H2O = N-acetylneuraminate + phosphate. It catalyses the reaction N-glycoloylneuraminate 9-phosphate + H2O = N-glycoloylneuraminate + phosphate. It participates in amino-sugar metabolism; N-acetylneuraminate biosynthesis. Inhibited by calcium. Inhibited by vanadate, sodium orthovanate and phosphonate. Functionally, catalyzes the dephosphorylation of N-acylneuraminate 9-phosphate (Neu5Ac-9-P) to sialic acid N-acetylneuraminic acid (Neu5Ac). May also use N-glycoloylneuraminate 9-phosphate as substrate. In Mus musculus (Mouse), this protein is N-acylneuraminate-9-phosphatase.